Here is a 369-residue protein sequence, read N- to C-terminus: Chaperone protein DnaJ (369 aa).

In terms of domain architecture, J spans 7–73 (DYYEILGVPR…QKRAMYDRFG (67 aa)). The CR-type zinc finger occupies 143–225 (GAEIPVEYER…CGGSGRVLRK (83 aa)). Cys156, Cys159, Cys173, Cys176, Cys199, Cys202, Cys213, and Cys216 together coordinate Zn(2+). CXXCXGXG motif repeat units lie at residues 156–163 (CPRCGGTG), 173–180 (CPSCGGTG), 199–206 (CERCGGTG), and 213–220 (CHECGGSG).

It belongs to the DnaJ family. In terms of assembly, homodimer. Requires Zn(2+) as cofactor.

The protein localises to the cytoplasm. Functionally, participates actively in the response to hyperosmotic and heat shock by preventing the aggregation of stress-denatured proteins and by disaggregating proteins, also in an autonomous, DnaK-independent fashion. Unfolded proteins bind initially to DnaJ; upon interaction with the DnaJ-bound protein, DnaK hydrolyzes its bound ATP, resulting in the formation of a stable complex. GrpE releases ADP from DnaK; ATP binding to DnaK triggers the release of the substrate protein, thus completing the reaction cycle. Several rounds of ATP-dependent interactions between DnaJ, DnaK and GrpE are required for fully efficient folding. Also involved, together with DnaK and GrpE, in the DNA replication of plasmids through activation of initiation proteins. In Thermotoga petrophila (strain ATCC BAA-488 / DSM 13995 / JCM 10881 / RKU-1), this protein is Chaperone protein DnaJ.